Here is a 661-residue protein sequence, read N- to C-terminus: Probable potassium transport system protein Kup 1 (661 aa).

A compositionally biased stretch (gly residues) spans 1–11; sequence MKGLFPAGGGN. Positions 1 to 38 are disordered; that stretch reads MKGLFPAGGGNPPSSYLSRFLPHRKERSPENVTSGRNG. The next 12 membrane-spanning stretches (helical) occupy residues 48 to 68, 85 to 105, 139 to 159, 177 to 197, 207 to 227, 251 to 271, 286 to 306, 324 to 344, 384 to 404, 405 to 425, 436 to 456, and 458 to 478; these read LALG…LYTI, IMGV…IKYI, AVVV…GFIT, AAKN…FLVQ, IFGP…LLCI, VHGL…EALY, WFAM…AALL, LLLP…QAMI, LMMV…GLAG, AYGV…FFVA, TAPL…SNLL, and FFDG…VMAS.

The protein belongs to the HAK/KUP transporter (TC 2.A.72) family.

Its subcellular location is the cell inner membrane. The catalysed reaction is K(+)(in) + H(+)(in) = K(+)(out) + H(+)(out). Functionally, transport of potassium into the cell. Likely operates as a K(+):H(+) symporter. This is Probable potassium transport system protein Kup 1 from Syntrophobacter fumaroxidans (strain DSM 10017 / MPOB).